The primary structure comprises 732 residues: MERQVLLSEPEEAAALYRGLSRQPALSAACLGPEVTTQYGGQYRTVHTEWTQRDLERMENIRFCRQYLVFHDGDSVVFAGPAGNSVETRGELLSRESPSGTMKAVLRKAGGTGPGEEKQFLEVWEKNRKLKSFNLSALEKHGPVYEDDCFGCLSWSHSETHLLYVAEKKRPKAESFFQTKALDVSASDDEIARLKKPDQAIKGDQFVFYEDWGENMVSKSIPVLCVLDVESGNISVLEGVPENVSPGQAFWAPGDAGVVFVGWWHEPFRLGIRFCTNRRSALYYVDLIGGKCELLSDDSLAVSSPRLSPDQCRIVYLQYPSLIPHHQCSQLCLYDWYTKVTSVVVDVVPRQLGENFSGIYCSLLPLGCWSADSQRVVFDSAQRSRQDLFAVDTQVGTVTSLTAGGSGGSWKLLTIDQDLMVAQFSTPSLPPTLKVGFLPSAGKEQSVLWVSLEEAEPIPDIHWGIRVLQPPPEQENVQYAGLDFEAILLQPGSPPDKTQVPMVVMPHGGPHSSFVTAWMLFPAMLCKMGFAVLLVNYRGSTGFGQDSILSLPGNVGHQDVKDVQFAVEQVLQEEHFDASHVALMGGSHGGFISCHLIGQYPETYRACVARNPVINIASMLGSTDIPDWCVVEAGFPFSSDCLPDLSVWAEMLDKSPIRYIPQVKTPLLLMLGQEDRRVPFKQGMEYYRALKTRNVPVRLLLYPKSTHALSEVEVESDSFMNAVLWLRTHLGS.

Met1 carries the post-translational modification N-acetylmethionine. Phosphoserine is present on residues Ser185 and Ser187. Residues Ser587, Asp675, and His707 each act as charge relay system in the active site.

In terms of assembly, homotetramer. Expressed in erythrocytes (at protein level).

The protein resides in the cytoplasm. It catalyses the reaction Cleavage of an N-acetyl or N-formyl amino acid from the N-terminus of a polypeptide.. Homotetramerization is required for activity. Tetramerization results in the formation of a gated channel which is involved in substrate selection and substrate access to the catalytic sites. In terms of biological role, this enzyme catalyzes the hydrolysis of the N-terminal peptide bond of an N-acetylated peptide to generate an N-acetylated amino acid and a peptide with a free N-terminus. It preferentially cleaves off Ac-Ala, Ac-Met and Ac-Ser. Also, involved in the degradation of oxidized and glycated proteins. This is Acylamino-acid-releasing enzyme (APEH) from Homo sapiens (Human).